The primary structure comprises 346 residues: Putative D-threonate 4-phosphate dehydrogenase (346 aa).

The substrate site is built by H141 and T142. Residues H171, H215, and H270 each coordinate a divalent metal cation. Positions 278 and 296 each coordinate substrate.

Belongs to the PdxA family. PdxA2 subfamily. In terms of assembly, homodimer. The cofactor is a divalent metal cation.

It catalyses the reaction 4-O-phospho-D-threonate + NAD(+) = dihydroxyacetone phosphate + CO2 + NADH. Catalyzes the NAD-dependent oxidation and subsequent decarboxylation of D-threonate 4-phosphate to produce dihydroxyacetone phosphate (DHAP). This is Putative D-threonate 4-phosphate dehydrogenase from Cutibacterium acnes (strain DSM 16379 / KPA171202) (Propionibacterium acnes).